The sequence spans 146 residues: Large ribosomal subunit protein uL15 (146 aa).

Residues 1-53 (MILSNLKPVPGARHSKKRLGRGPGSGTGKTSGKGHKGQKARSGGGVRPGFEGG) are disordered. 2 stretches are compositionally biased toward gly residues: residues 21–31 (RGPGSGTGKTS) and 42–52 (SGGGVRPGFEG).

Belongs to the universal ribosomal protein uL15 family. Part of the 50S ribosomal subunit.

Binds to the 23S rRNA. This chain is Large ribosomal subunit protein uL15, found in Acholeplasma laidlawii (strain PG-8A).